Here is a 316-residue protein sequence, read N- to C-terminus: MLQPNFRRFEPSYSWKSREKSTENRGFLSRMCGIKQKMNKYNCRGKYQETNDQNLMQDSGYSLKIISSGDEQITIVYTSRLGKMKDLQVPEIEISGVLLERLEACNYRLDELFIDLKASKCICSSNELLNIPKIIVRRLFLKMESLEMLEWWIERVDPNSLNELCIAPHGEYPLDIPSKIFDLPHFQNCKTLSIMEHCSFSTDQFLALCIAIPNFSFYSDRIDENIVAHAIKKRLSLNDQFVVLEWFFTKHVNVEKVTGDLKCTNYDRKERFDVKTECFEPVDVYSVPDENNKKTSLLVLKDSTDNFKPYNIVAFS.

This is an uncharacterized protein from Caenorhabditis elegans.